The primary structure comprises 329 residues: DNA repair protein RAD51 homolog 4 (329 aa).

A preferentially binds ssDNA region spans residues 1-83 (MGMLRAGLCP…ELKTSTAILS (83 aa)). Positions 4-77 (LRAGLCPGLT…GADLYEELKT (74 aa)) are interaction with XRCC2. An interaction with RAD51C region spans residues 77–328 (TSTAILSTGI…EQSPELPGKQ (252 aa)). 107 to 114 (GGPGSGKT) provides a ligand contact to ATP.

It belongs to the RecA family. RAD51 subfamily. As to quaternary structure, part of the BCDX2 complex consisting of RAD51B, RAD51C, RAD51D and XRCC2; the complex has a ring-like structure arranged into a flat disc around a central channel. In the absence of DNA, the BCDX2 subcomplex XRCC2:RAD51D formed a multimeric ring structure; in the presence of single-stranded DNA it formed a filamentous structure with the ssDNA. Interacts with SWSAP1 and ZSWIM7; involved in homologous recombination repair. Interacts with BLM; required for stimulation of BLM activity by the BCDX2 subcomplex XRCC2:RAD51D. As to expression, highly expressed in brain followed by testis. Also expressed in heart, liver, kidney, spleen, lung and skeletal muscle.

It is found in the nucleus. The protein resides in the chromosome. Its subcellular location is the telomere. Functionally, involved in the homologous recombination repair (HRR) pathway of double-stranded DNA breaks arising during DNA replication or induced by DNA-damaging agents. Bind to single-stranded DNA (ssDNA) and has DNA-dependent ATPase activity. Part of the RAD51 paralog protein complex BCDX2 which acts in the BRCA1-BRCA2-dependent HR pathway. Upon DNA damage, BCDX2 acts downstream of BRCA2 recruitment and upstream of RAD51 recruitment. BCDX2 binds predominantly to the intersection of the four duplex arms of the Holliday junction and to junction of replication forks. The BCDX2 complex was originally reported to bind single-stranded DNA, single-stranded gaps in duplex DNA and specifically to nicks in duplex DNA. Involved in telomere maintenance. The BCDX2 subcomplex XRCC2:RAD51D can stimulate Holliday junction resolution by BLM. The chain is DNA repair protein RAD51 homolog 4 (Rad51d) from Mus musculus (Mouse).